The sequence spans 588 residues: A-type ATP synthase subunit A (588 aa).

237-244 (GPFGSGKT) is a binding site for ATP.

Belongs to the ATPase alpha/beta chains family. As to quaternary structure, has multiple subunits with at least A(3), B(3), C, D, E, F, H, I and proteolipid K(x).

Its subcellular location is the cell membrane. It catalyses the reaction ATP + H2O + 4 H(+)(in) = ADP + phosphate + 5 H(+)(out). Its function is as follows. Component of the A-type ATP synthase that produces ATP from ADP in the presence of a proton gradient across the membrane. The A chain is the catalytic subunit. The sequence is that of A-type ATP synthase subunit A from Methanoregula boonei (strain DSM 21154 / JCM 14090 / 6A8).